We begin with the raw amino-acid sequence, 137 residues long: Peptide methionine sulfoxide reductase MsrB (137 aa).

Positions 7–129 (AEELKKNLSE…NSASLRFTDG (123 aa)) constitute a MsrB domain. Positions 46, 49, 95, and 98 each coordinate Zn(2+). The Nucleophile role is filled by cysteine 118.

It belongs to the MsrB Met sulfoxide reductase family. The cofactor is Zn(2+).

The enzyme catalyses L-methionyl-[protein] + [thioredoxin]-disulfide + H2O = L-methionyl-(R)-S-oxide-[protein] + [thioredoxin]-dithiol. This Escherichia coli (strain K12 / MC4100 / BW2952) protein is Peptide methionine sulfoxide reductase MsrB.